We begin with the raw amino-acid sequence, 716 residues long: Leucine-rich repeat neuronal protein 1 (716 aa).

Positions 1 to 25 (MARMSFVLAAYQMVLSLLMTSLTGS) are cleaved as a signal peptide. In terms of domain architecture, LRRNT spans 26 to 72 (SLQSSECPQLCVCEIRPWFTPQSTYREATTVDCNDLRLTRIPSNLSS). At 26 to 631 (SLQSSECPQL…DISDQETSTA (606 aa)) the chain is on the extracellular side. Residue N69 is glycosylated (N-linked (GlcNAc...) asparagine). 9 LRR repeats span residues 73-95 (DTQVLLLQSNNIAKTVDELQQLF), 96-117 (NLTELDFSQNNFTNIKEVGLAN), 120-141 (QLTTLHLEENQITEMNDYCLQD), 144-165 (NLQELYINHNQISTISANAFSG), 168-189 (NLLRLHLNSNKLKVIDSRWFDS), 192-213 (NLEILMIGENPVIGILDMNFKP), 216-237 (NLRSLVLAGMYLTDIPGNALVG), 240-261 (SLESLSFYDNKLVKVPQLALQK), and 264-285 (NLKFLDLNKNPIHKIQEGDFKN). 3 N-linked (GlcNAc...) asparagine glycosylation sites follow: N96, N106, and N117. The LRRCT domain maps to 371–424 (NPLRCDCVIHWINSNKTNIRFMEPLSMFCAMPPEYRGQQVKEVLIQDSSEQCLP). N385 carries N-linked (GlcNAc...) asparagine glycosylation. The 92-residue stretch at 424–515 (PMISHDTFPN…GADTRVVMIK (92 aa)) folds into the Ig-like C2-type domain. C447 and C499 are joined by a disulfide. N-linked (GlcNAc...) asparagine glycosylation is found at N517, N582, and N611. The 93-residue stretch at 525–617 (QVLKIYVKQT…SCVNVTTKNA (93 aa)) folds into the Fibronectin type-III domain. A helical membrane pass occupies residues 632–652 (LAAVMGSMFAVISLASIAVYI). At 653-716 (AKRFKRKNYH…VDTSRSYYMW (64 aa)) the chain is on the cytoplasmic side. The segment covering 691–700 (DSEKDKDGTA) has biased composition (basic and acidic residues). Positions 691-716 (DSEKDKDGTADTKPTQVDTSRSYYMW) are disordered. Residues 702-716 (TKPTQVDTSRSYYMW) are compositionally biased toward polar residues.

Its subcellular location is the membrane. This chain is Leucine-rich repeat neuronal protein 1 (LRRN1), found in Bos taurus (Bovine).